The sequence spans 1684 residues: GRIP and coiled-coil domain-containing protein 2 (1684 aa).

At methionine 1 the chain carries N-acetylmethionine. The disordered stretch occupies residues 1 to 22; the sequence is MEDLVQDGVASPATPGTGKSKL. Serine 11 bears the Phosphoserine mark. Phosphothreonine is present on threonine 14. Positions 110–1618 form a coiled coil; sequence VTKMGDAHKE…REKSAANLEY (1509 aa). A phosphoserine mark is found at serine 236, serine 1483, and serine 1487. The disordered stretch occupies residues 1475-1502; the sequence is LKNEPTTRSPVSSQQSLKNLRERRNTDL. Positions 1477–1492 are enriched in polar residues; sequence NEPTTRSPVSSQQSLK. A mediates interaction with RAB6A region spans residues 1574 to 1613; that stretch reads HLNGLLRETEATNAILMEQIKLLKSEIRRLERNQEREKSA. The segment at 1574–1684 is mediates interaction with RAB9A; the sequence is HLNGLLRETE…SYLHSWSGLR (111 aa). Residues 1609–1659 form the GRIP domain; that stretch reads REKSAANLEYLKNVLLQFIFLKPGSERERLLPVINTMLQLSPEEKGKLAAV.

Homodimer. Interacts (via GRIP domain) with RAB6A (preferentially in its GTP-bound form). May interact (RAB6A-dependent) with ARL1; according to PubMed:19703403, RAB6A and ARL1 are not involved in GCC2 Golgi localization as proposed by PubMed:18243103. Interacts (probably via GRIP domain) with RAB9A (preferentially in its GTP-bound form). Interacts with CLASP1 and CLASP2; recruits both proteins to membranes of the TGN. Interacts with STX16. In terms of tissue distribution, ubiquitous.

The protein resides in the cytoplasm. It is found in the golgi apparatus. Its subcellular location is the trans-Golgi network membrane. In terms of biological role, golgin which probably tethers transport vesicles to the trans-Golgi network (TGN) and regulates vesicular transport between the endosomes and the Golgi. As a RAB9A effector it is involved in recycling of the mannose 6-phosphate receptor from the late endosomes to the TGN. May also play a role in transport between the recycling endosomes and the Golgi. Required for maintenance of the Golgi structure, it is involved in the biogenesis of noncentrosomal, Golgi-associated microtubules through recruitment of CLASP1 and CLASP2. The polypeptide is GRIP and coiled-coil domain-containing protein 2 (GCC2) (Homo sapiens (Human)).